The primary structure comprises 186 residues: Elongation factor P (186 aa).

The protein belongs to the elongation factor P family.

The protein resides in the cytoplasm. It functions in the pathway protein biosynthesis; polypeptide chain elongation. Functionally, involved in peptide bond synthesis. Stimulates efficient translation and peptide-bond synthesis on native or reconstituted 70S ribosomes in vitro. Probably functions indirectly by altering the affinity of the ribosome for aminoacyl-tRNA, thus increasing their reactivity as acceptors for peptidyl transferase. This Beutenbergia cavernae (strain ATCC BAA-8 / DSM 12333 / CCUG 43141 / JCM 11478 / NBRC 16432 / NCIMB 13614 / HKI 0122) protein is Elongation factor P.